We begin with the raw amino-acid sequence, 937 residues long: Isoleucine--tRNA ligase (937 aa).

The short motif at Pro58–His68 is the 'HIGH' region element. Residue Glu561 participates in L-isoleucyl-5'-AMP binding. The 'KMSKS' region motif lies at Lys602–Ser606. Lys605 contributes to the ATP binding site. 4 residues coordinate Zn(2+): Cys900, Cys903, Cys920, and Cys923.

The protein belongs to the class-I aminoacyl-tRNA synthetase family. IleS type 1 subfamily. Monomer. It depends on Zn(2+) as a cofactor.

Its subcellular location is the cytoplasm. It catalyses the reaction tRNA(Ile) + L-isoleucine + ATP = L-isoleucyl-tRNA(Ile) + AMP + diphosphate. Its function is as follows. Catalyzes the attachment of isoleucine to tRNA(Ile). As IleRS can inadvertently accommodate and process structurally similar amino acids such as valine, to avoid such errors it has two additional distinct tRNA(Ile)-dependent editing activities. One activity is designated as 'pretransfer' editing and involves the hydrolysis of activated Val-AMP. The other activity is designated 'posttransfer' editing and involves deacylation of mischarged Val-tRNA(Ile). This is Isoleucine--tRNA ligase from Photorhabdus laumondii subsp. laumondii (strain DSM 15139 / CIP 105565 / TT01) (Photorhabdus luminescens subsp. laumondii).